Consider the following 202-residue polypeptide: Matrix protein (202 aa).

Positions Asp-13 to Trp-32 are disordered. The PPXY motif motif lies at Pro-35 to Tyr-38.

This sequence belongs to the lyssavirus matrix protein family. Homomultimer. Interacts with nucleoprotein and with the cytoplasmic domain of glycoprotein.

The protein resides in the virion membrane. It is found in the host endomembrane system. Plays a major role in assembly and budding of virion. Completely covers the ribonucleoprotein coil and keep it in condensed bullet-shaped form. Inhibits viral transcription and stimulates replication. Plays a major role in early induction of TRAIL-mediated apoptosis in infected neurons. In Lagos bat virus (LBV), this protein is Matrix protein (M).